Here is a 93-residue protein sequence, read N- to C-terminus: Integration host factor subunit beta (93 aa).

Belongs to the bacterial histone-like protein family. Heterodimer of an alpha and a beta chain.

Functionally, this protein is one of the two subunits of integration host factor, a specific DNA-binding protein that functions in genetic recombination as well as in transcriptional and translational control. In Rhodospirillum centenum (strain ATCC 51521 / SW), this protein is Integration host factor subunit beta.